The following is a 461-amino-acid chain: Asparagine--tRNA ligase (461 aa).

Belongs to the class-II aminoacyl-tRNA synthetase family. In terms of assembly, homodimer.

The protein localises to the cytoplasm. The enzyme catalyses tRNA(Asn) + L-asparagine + ATP = L-asparaginyl-tRNA(Asn) + AMP + diphosphate + H(+). In Oleidesulfovibrio alaskensis (strain ATCC BAA-1058 / DSM 17464 / G20) (Desulfovibrio alaskensis), this protein is Asparagine--tRNA ligase.